We begin with the raw amino-acid sequence, 178 residues long: Large ribosomal subunit protein uL6 (178 aa).

It belongs to the universal ribosomal protein uL6 family. As to quaternary structure, part of the 50S ribosomal subunit.

Functionally, this protein binds to the 23S rRNA, and is important in its secondary structure. It is located near the subunit interface in the base of the L7/L12 stalk, and near the tRNA binding site of the peptidyltransferase center. This chain is Large ribosomal subunit protein uL6, found in Sulfurovum sp. (strain NBC37-1).